Reading from the N-terminus, the 2224-residue chain is Multifunctional protein r (2224 aa).

Positions 1-369 (MASTDCYLAL…PQDTEFLFDV (369 aa)) are GATase (Glutamine amidotransferase). 3 residues coordinate L-glutamine: Ser55, Gly240, and Gly242. In terms of domain architecture, Glutamine amidotransferase type-1 spans 195–380 (RIAILDCGLK…MESIQQKDLT (186 aa)). The Nucleophile; for GATase activity role is filled by Cys269. Residues Leu270, Gln273, Asn311, Gly313, and Tyr314 each coordinate L-glutamine. Active-site for GATase activity residues include His353 and Glu355. Positions 370–415 (FMESIQQKDLTIPQLIEQRLRPTTPAIDSAPVMPRKVLILGSGGLS) are linker. Residues 416-1470 (IGQAGEFDYS…KPPMKTHTDC (1055 aa)) are CPSase (Carbamoyl-phosphate synthase). Arg525, Arg565, Gly571, Gly572, Lys602, Glu609, Gly635, Ile636, His637, Gln678, and Glu692 together coordinate ATP. ATP-grasp domains follow at residues 529 to 721 (AERV…KLAL) and 1066 to 1257 (SRML…RAIV). Mg(2+)-binding residues include Gln678, Glu692, and Asn694. Mn(2+)-binding residues include Gln678, Glu692, and Asn694. Positions 1102, 1141, 1143, 1148, 1173, 1174, 1175, 1176, 1216, and 1228 each coordinate ATP. 3 residues coordinate Mg(2+): Gln1216, Glu1228, and Asn1230. Positions 1216, 1228, and 1230 each coordinate Mn(2+). The MGS-like domain occupies 1322–1477 (FQIPKNAVLL…TDCMTSRRIV (156 aa)). The linker stretch occupies residues 1471-1484 (MTSRRIVKLPGFID). Residues 1485-1800 (VHVHLREPGA…GTKVKGRVHR (316 aa)) form a DHOase (dihydroorotase) region. Zn(2+) contacts are provided by His1486 and His1488. (S)-dihydroorotate-binding residues include Arg1490 and Asn1520. Residues Lys1571, His1605, Cys1628, His1629, and Glu1652 each contribute to the Zn(2+) site. Lys1571 carries the post-translational modification N6-carboxylysine. Arg1676 is a (S)-dihydroorotate binding site. Asp1701 is a binding site for Zn(2+). Catalysis depends on Asp1701, which acts as the For DHOase activity. His1705 and Pro1717 together coordinate (S)-dihydroorotate. The tract at residues 1801–1912 (VVLRGEVAFV…QRTTNSNPVA (112 aa)) is linker. The disordered stretch occupies residues 1821-1843 (GQNVRPKQSPLASEASQDLLPSD). 4 positions are modified to phosphoserine: Ser1883, Ser1885, Ser1892, and Ser1894. The segment at 1913-2224 (HSLMGKHILA…MVVGGRNTAL (312 aa)) is ATCase (Aspartate transcarbamylase). Carbamoyl phosphate-binding residues include Arg1970 and Thr1971. L-aspartate is bound at residue Lys1998. Carbamoyl phosphate-binding residues include Arg2019, His2047, and Gln2050. L-aspartate contacts are provided by Arg2080 and Arg2141. 2 residues coordinate carbamoyl phosphate: Leu2180 and Pro2181.

It in the N-terminal section; belongs to the CarA family. The protein in the 2nd section; belongs to the CarB family. In the 3rd section; belongs to the metallo-dependent hydrolases superfamily. DHOase family. CAD subfamily. This sequence in the C-terminal section; belongs to the aspartate/ornithine carbamoyltransferase superfamily. ATCase family. Requires Mg(2+) as cofactor. It depends on Mn(2+) as a cofactor. Zn(2+) is required as a cofactor.

The protein localises to the cytoplasm. The catalysed reaction is hydrogencarbonate + L-glutamine + 2 ATP + H2O = carbamoyl phosphate + L-glutamate + 2 ADP + phosphate + 2 H(+). The enzyme catalyses L-glutamine + H2O = L-glutamate + NH4(+). It carries out the reaction hydrogencarbonate + NH4(+) + 2 ATP = carbamoyl phosphate + 2 ADP + phosphate + 2 H(+). It catalyses the reaction carbamoyl phosphate + L-aspartate = N-carbamoyl-L-aspartate + phosphate + H(+). The catalysed reaction is (S)-dihydroorotate + H2O = N-carbamoyl-L-aspartate + H(+). The protein operates within pyrimidine metabolism; UMP biosynthesis via de novo pathway; (S)-dihydroorotate from bicarbonate: step 1/3. Its pathway is pyrimidine metabolism; UMP biosynthesis via de novo pathway; (S)-dihydroorotate from bicarbonate: step 2/3. It participates in pyrimidine metabolism; UMP biosynthesis via de novo pathway; (S)-dihydroorotate from bicarbonate: step 3/3. Its function is as follows. Multifunctional protein that encodes the first 3 enzymatic activities of the de novo pyrimidine pathway: carbamoylphosphate synthetase (CPSase; EC 6.3.5.5), aspartate transcarbamylase (ATCase; EC 2.1.3.2) and dihydroorotase (DHOase; EC 3.5.2.3). The CPSase-function is accomplished in 2 steps, by a glutamine-dependent amidotransferase activity (GATase) that binds and cleaves glutamine to produce ammonia, followed by an ammonium-dependent carbamoyl phosphate synthetase, which reacts with the ammonia, hydrogencarbonate and ATP to form carbamoyl phosphate. The endogenously produced carbamoyl phosphate is sequestered and channeled to the ATCase active site. ATCase then catalyzes the formation of carbamoyl-L-aspartate from L-aspartate and carbamoyl phosphate. In the last step, DHOase catalyzes the cyclization of carbamoyl aspartate to dihydroorotate. This Drosophila melanogaster (Fruit fly) protein is Multifunctional protein r (r).